A 642-amino-acid polypeptide reads, in one-letter code: Tigger transposable element-derived protein 5 (642 aa).

Pro residues-rich tracts occupy residues 1 to 10 (MYPAGPPAGP) and 19 to 43 (LPGP…PGPR). Residues 1–45 (MYPAGPPAGPVPRRGRRPLPGPPAPAPAPVPAARPPPPAPGPRPR) are disordered. The 52-residue stretch at 47–98 (AVKMAFRKAYSIKDKLQAIERVKGGERQASVCRDFGVPGGTLRGWLKDEPKL) folds into the HTH psq-type domain. 2 consecutive DNA-binding regions (H-T-H motif) follow at residues 74–94 (QASV…WLKD) and 145–178 (PLIQ…WQKR). An HTH CENPB-type domain is found at 112 to 185 (QRKKMRLANE…QKRHGISSQR (74 aa)). The interval 185 to 233 (RFYGEAGPPAPSPAPGPPVKEEPALPSGAGPLPDRAPAPPPPAEGGYGD) is disordered. 2 stretches are compositionally biased toward pro residues: residues 192-202 (PPAPSPAPGPP) and 218-227 (DRAPAPPPPA). DDE-1 domains are found at residues 233–357 (DEQI…VLLV) and 410–477 (RAHI…ERCW). The interval 535–587 (LDDDGGPPEGCREEVGPALPPAAPPAPASLPSAMGGGEDEEEATDYGGTSVPT) is disordered. Over residues 552-562 (ALPPAAPPAPA) the composition is skewed to pro residues.

Belongs to the tigger transposable element derived protein family.

It localises to the nucleus. The chain is Tigger transposable element-derived protein 5 (TIGD5) from Homo sapiens (Human).